A 291-amino-acid polypeptide reads, in one-letter code: Elongation factor Ts (291 aa).

Residues 79 to 82 are involved in Mg(2+) ion dislocation from EF-Tu; sequence TDFV.

The protein belongs to the EF-Ts family.

The protein resides in the cytoplasm. Functionally, associates with the EF-Tu.GDP complex and induces the exchange of GDP to GTP. It remains bound to the aminoacyl-tRNA.EF-Tu.GTP complex up to the GTP hydrolysis stage on the ribosome. The polypeptide is Elongation factor Ts (Jannaschia sp. (strain CCS1)).